The following is a 748-amino-acid chain: Transducin-like enhancer protein 4 (748 aa).

Disordered regions lie at residues 1 to 20 (MIRD…PHQP) and 157 to 332 (LPIK…DPLA). The interval 1-112 (MIRDLSKMYR…SQEQQQLQAQ (112 aa)) is q domain. The interval 113 to 179 (HLLTWTWSAC…HQRDRDSIKS (67 aa)) is GP domain. Over residues 158 to 177 (PIKDEKKHHDNDHQRDRDSI) the composition is skewed to basic and acidic residues. Residues 178–189 (KSSSVSPSASFR) show a composition bias toward low complexity. The interval 180–249 (SSVSPSASFR…SPRGSPAHSP (70 aa)) is ccN domain. Serine 183, serine 187, serine 191, and serine 197 each carry phosphoserine. The segment covering 190–227 (GSEKHRNSTDYSSESKKQKTEEKEIAARYDSDGEKSDD) has biased composition (basic and acidic residues). Position 212 is an N6-acetyllysine (lysine 212). Serine 220 is subject to Phosphoserine. Phosphoserine; by CK2 is present on serine 225. At serine 240 the chain carries Phosphoserine; by CDK1. Serine 244 and serine 248 each carry phosphoserine. Positions 248 to 264 (SPRENGLDKTRLLKKDA) are enriched in basic and acidic residues. An SP domain region spans residues 250–427 (RENGLDKTRL…PGGKPAYSFH (178 aa)). Residue lysine 256 is modified to N6-acetyllysine. Residues 265 to 280 (PISPASVASSSSTPSS) show a composition bias toward low complexity. The residue at position 267 (serine 267) is a Phosphoserine. The span at 292–303 (TTPVSKSNTPTP) shows a compositional bias: polar residues. Threonine 293 carries the phosphothreonine modification. Phosphoserine occurs at positions 296 and 298. A phosphothreonine mark is found at threonine 300, threonine 302, threonine 309, and threonine 315. Serine 394 bears the Phosphoserine mark. WD repeat units follow at residues 460–498 (NHGE…NKSP), 506–545 (NRDN…PRIK), 550–589 (SSAP…LVRQ), 592–631 (GHTD…QLQQ), 633–672 (DFTS…KYQL), 674–713 (LHES…SIFQ), and 715–748 (KESS…EVIY).

This sequence belongs to the WD repeat Groucho/TLE family. In terms of assembly, homooligomer and heterooligomer with other family members. Binds PAX5, LEF1, TCF7, TCF7L1 and TCF7L2. Interacts with ZNF703; TLE4 may mediate ZNF703 transcriptional repression. Interacts with SIX3 and SIX6. Interacts with PAX2. Post-translationally, phosphorylated. PAX5 binding increases phosphorylation. Ubiquitinated by XIAP/BIRC4.

It localises to the nucleus. Transcriptional corepressor that binds to a number of transcription factors. Inhibits the transcriptional activation mediated by PAX5, and by CTNNB1 and TCF family members in Wnt signaling. The effects of full-length TLE family members may be modulated by association with dominant-negative AES. Essential for the transcriptional repressor activity of SIX3 during retina and lens development and for SIX3 transcriptional auto-repression. Involved in transcriptional repression of GNRHR and enhances MSX1-mediated transcriptional repression of CGA/alpha-GSU. This is Transducin-like enhancer protein 4 (Tle4) from Rattus norvegicus (Rat).